We begin with the raw amino-acid sequence, 114 residues long: NLP effector protein 1 (114 aa).

It belongs to the Necrosis inducing protein (NPP1) family.

It is found in the secreted. It localises to the host cytoplasm. Functionally, probable secreted effector that may act as a pathogen-associated molecular pattern (PAMP) recognized by the plant immune system. Seems not to induce necrosis, neither in several susceptible or resistant Vitis species nor in the dicot model plant Nicotiana benthamiana. This chain is NLP effector protein 1, found in Plasmopara viticola (Downy mildew of grapevine).